The sequence spans 244 residues: 5-oxoprolinase subunit A (244 aa).

The protein belongs to the LamB/PxpA family. Forms a complex composed of PxpA, PxpB and PxpC.

The catalysed reaction is 5-oxo-L-proline + ATP + 2 H2O = L-glutamate + ADP + phosphate + H(+). In terms of biological role, catalyzes the cleavage of 5-oxoproline to form L-glutamate coupled to the hydrolysis of ATP to ADP and inorganic phosphate. The sequence is that of 5-oxoprolinase subunit A from Salmonella arizonae (strain ATCC BAA-731 / CDC346-86 / RSK2980).